The sequence spans 1102 residues: DNA-directed RNA polymerase subunit beta (1102 aa).

Residues 1081 to 1102 form a disordered region; it reads LPGKRTPSRPIYESLSTEGNQD.

It belongs to the RNA polymerase beta chain family. In terms of assembly, in cyanobacteria the RNAP catalytic core is composed of 2 alpha, 1 beta, 1 beta', 1 gamma and 1 omega subunit. When a sigma factor is associated with the core the holoenzyme is formed, which can initiate transcription.

The enzyme catalyses RNA(n) + a ribonucleoside 5'-triphosphate = RNA(n+1) + diphosphate. DNA-dependent RNA polymerase catalyzes the transcription of DNA into RNA using the four ribonucleoside triphosphates as substrates. The sequence is that of DNA-directed RNA polymerase subunit beta from Trichodesmium erythraeum (strain IMS101).